The sequence spans 763 residues: MSELLSVALFLASVLIYAWKAGRNTWWFAATLTVLGLFVILNITLYASDYFTGDGINDAVLYTLTNSLTGAGVGKYILPGIGIALALVAVFGALGWVLRRRRHHPHHVGYSLLALLLALGSVDASPAFRQITELVKSQMRDGDPDFAVYYKEPAKTIPNPKLNLVYIYGESLERTYFDNDAFPNLTPELGALKNEGLDFSHTMQLPGTDYTIAGMVASQCGIPLFAPFEGNASASVSSFFPQNICLGDILKNSGYQNYFVQGANLRFAGKDVFLKSHGFDHLYGAEELKTVVADPSYRNDWGFYDDTVLDEAWKKFEALSRSGQRFSLFTLTVDTHHPDGFISRTCNRKRYDYDGKPNQSFSAVSCSQENIAEFINKIKASPWFKDTVIVVSSDHLAMNNTAWKYLNKQDRNNLFFILRGDKPQQETLAVKRNTMDNGATVLDILGGDNFIGLGRSSLSGQSLSEVFLNVKEKVLAMKPDIIRLWNFPKEIKDFTVDRDKNMIAFSGSHFRLPLLLRVSDKRVEPLPESEYSAPLRFQLADFAPRDNFVWIDRCYKMAQLWAPALALSTDWCVSQGQLGGQQTVQHVDKAQWQGKTAFKDTMIDMERYKGNVDTLKIVDNDIRYKADSFIFNVAGAPEEVKQFSGISRPESWGRWSNAQLGDEVKIEYKAPLPKKFDLVITAKAFGDNANRPIPVRVGNEEQTLVLGHDVSTITLHFNNPTDANTLVIAPPAPVSTNEGNILGHSPRKLGIGMVEIKVVNVES.

The next 4 helical transmembrane spans lie at 1-21, 26-46, 77-97, and 108-128; these read MSEL…AWKA, WWFA…ITLY, ILPG…LGWV, and VGYS…SPAF.

The protein belongs to the OpgB family.

The protein resides in the cell inner membrane. The enzyme catalyses a phosphatidylglycerol + a membrane-derived-oligosaccharide D-glucose = a 1,2-diacyl-sn-glycerol + a membrane-derived-oligosaccharide 6-(glycerophospho)-D-glucose.. The protein operates within glycan metabolism; osmoregulated periplasmic glucan (OPG) biosynthesis. Its function is as follows. Transfers a phosphoglycerol residue from phosphatidylglycerol to the membrane-bound nascent glucan backbones. The polypeptide is Phosphoglycerol transferase I (Salmonella heidelberg (strain SL476)).